A 410-amino-acid chain; its full sequence is Angiopoietin-related protein 4 (410 aa).

The first 23 residues, 1–23 (MRCAPTAGAALMLCAATAGLLSA), serve as a signal peptide directing secretion. Positions 81 to 106 (KDPEGSAAPPRAQANLVNPGGGDASP) are disordered. Residues 107-155 (ETLRSLKTQLEAQNSRIQQLFQKVAQQQRHLEKQQLRIQNLQSQMDHLA) are a coiled coil. N-linked (GlcNAc...) asparagine glycosylation is present at Asn-184. Residues 186–408 (SRLHRLPRDC…ATTILVQPTA (223 aa)) enclose the Fibrinogen C-terminal domain. 2 disulfides stabilise this stretch: Cys-195/Cys-223 and Cys-348/Cys-361.

As to quaternary structure, homooligomer; disulfide-linked via Cys residues in the N-terminal part of the protein. The homooligomer undergoes proteolytic processing to release the ANGPTL4 C-terminal chain, which circulates as a monomer. The homooligomer unprocessed form is able to interact with the extracellular matrix. N-glycosylated. Post-translationally, forms disulfide-linked dimers and tetramers. In terms of processing, cleaved into a smaller N-terminal chain and a larger chain that contains the fibrinogen C-terminal domain; both cleaved and uncleaved forms are detected in the extracellular space. The cleaved form is not present within the cell.

It localises to the secreted. Its subcellular location is the extracellular space. The protein resides in the extracellular matrix. In terms of biological role, mediates inactivation of the lipoprotein lipase LPL, and thereby plays a role in the regulation of triglyceride clearance from the blood serum and in lipid metabolism. May also play a role in regulating glucose homeostasis and insulin sensitivity. Inhibits proliferation, migration, and tubule formation of endothelial cells and reduces vascular leakage. Upon heterologous expression, inhibits the adhesion of endothelial cell to the extracellular matrix (ECM), and inhibits the reorganization of the actin cytoskeleton, formation of actin stress fibers and focal adhesions in endothelial cells that have adhered to ANGPTL4-containing ECM (in vitro). Depending on context, may modulate tumor-related angiogenesis. Its function is as follows. Mediates inactivation of the lipoprotein lipase LPL, and thereby plays an important role in the regulation of triglyceride clearance from the blood serum and in lipid metabolism. Has higher activity in LPL inactivation than the uncleaved protein. This chain is Angiopoietin-related protein 4 (ANGPTL4), found in Bos taurus (Bovine).